A 687-amino-acid chain; its full sequence is Transcription activator of gluconeogenesis SNOG_12336 (687 aa).

A disordered region spans residues 1-56 (MASPDAEDASPSPEYRSDLDDDMAAEQKTDDGSPSQKSSNGQKPASNAKDPLRPRR). A compositionally biased stretch (polar residues) spans 32–45 (GSPSQKSSNGQKPA). Positions 63-91 (CFACQRAHLTCGDERPCTRCIKRGLQDHC) form a DNA-binding region, zn(2)-C6 fungal-type. Composition is skewed to polar residues over residues 150-159 (PSGTFYQPPS) and 169-179 (HGRSFSDQQSP). 3 disordered regions span residues 150–214 (PSGT…GPLF), 300–411 (ESQS…KRHR), and 536–561 (GNSR…GQEA). A compositionally biased stretch (low complexity) spans 195-212 (PPSSISQGQPGQMQQFGP). Positions 300-318 (ESQSRQNSMHIHTPTSSAT) are enriched in polar residues. Over residues 342-357 (PSSHSTASPASTDASA) the composition is skewed to low complexity. Polar residues-rich tracts occupy residues 362–384 (NPLS…SPTT), 392–402 (RPPSTALQPIH), and 546–561 (MSTQ…GQEA). The 72-residue stretch at 482-553 (NLMTLQDHFT…SEMSTQTNTT (72 aa)) folds into the PAS domain.

It belongs to the ERT1/acuK family.

Its subcellular location is the nucleus. Transcription factor which regulates nonfermentable carbon utilization. Activator of gluconeogenetic genes. This chain is Transcription activator of gluconeogenesis SNOG_12336, found in Phaeosphaeria nodorum (strain SN15 / ATCC MYA-4574 / FGSC 10173) (Glume blotch fungus).